The primary structure comprises 126 residues: Sperm-specific H1/protamine-like protein type 2 (126 aa).

One can recognise an H15 domain in the interval 5 to 84 (KKPTTLSMIV…GATGSFRVGK (80 aa)). The disordered stretch occupies residues 74–126 (SGATGSFRVGKAPASPKKAKKAKSPKKKSSKKSKNKSNNAKAKKSPKKKADSN). Residues 90 to 120 (KKAKKAKSPKKKSSKKSKNKSNNAKAKKSPK) show a composition bias toward basic residues.

In terms of processing, OE2 and OE3 are produced by post-translational cleavage of a common precursor. As to expression, sperm.

It is found in the nucleus. The protein localises to the chromosome. In terms of biological role, linker histones are implicated in chromatin remodeling and/or transcriptional regulation during spermiogenesis, the process of spermatid maturation into spermatozoa. Protamines substitute for histones in the chromatin of sperm during the haploid phase of spermatogenesis. They compact sperm DNA into a highly condensed, stable and inactive complex. The chain is Sperm-specific H1/protamine-like protein type 2 from Ostrea edulis (Native oyster).